The chain runs to 707 residues: Polyribonucleotide nucleotidyltransferase (707 aa).

Mg(2+) is bound by residues D486 and D492. Residues P553–I612 form the KH domain. One can recognise an S1 motif domain in the interval G622–K690.

It belongs to the polyribonucleotide nucleotidyltransferase family. The cofactor is Mg(2+).

The protein resides in the cytoplasm. The catalysed reaction is RNA(n+1) + phosphate = RNA(n) + a ribonucleoside 5'-diphosphate. Functionally, involved in mRNA degradation. Catalyzes the phosphorolysis of single-stranded polyribonucleotides processively in the 3'- to 5'-direction. The sequence is that of Polyribonucleotide nucleotidyltransferase from Sulfurihydrogenibium azorense (strain DSM 15241 / OCM 825 / Az-Fu1).